A 249-amino-acid polypeptide reads, in one-letter code: 2,3-bisphosphoglycerate-dependent phosphoglycerate mutase (249 aa).

Substrate is bound by residues 8-15 (RHGESTWN), 21-22 (TG), Arg60, 87-90 (ERHY), Lys98, 114-115 (RR), and 183-184 (GN). Catalysis depends on His9, which acts as the Tele-phosphohistidine intermediate. The active-site Proton donor/acceptor is the Glu87.

The protein belongs to the phosphoglycerate mutase family. BPG-dependent PGAM subfamily. As to quaternary structure, homodimer.

The catalysed reaction is (2R)-2-phosphoglycerate = (2R)-3-phosphoglycerate. It participates in carbohydrate degradation; glycolysis; pyruvate from D-glyceraldehyde 3-phosphate: step 3/5. Catalyzes the interconversion of 2-phosphoglycerate and 3-phosphoglycerate. The protein is 2,3-bisphosphoglycerate-dependent phosphoglycerate mutase of Aromatoleum aromaticum (strain DSM 19018 / LMG 30748 / EbN1) (Azoarcus sp. (strain EbN1)).